The chain runs to 269 residues: Tryptophan synthase alpha chain (269 aa).

Active-site proton acceptor residues include E49 and D60.

Belongs to the TrpA family. In terms of assembly, tetramer of two alpha and two beta chains.

It catalyses the reaction (1S,2R)-1-C-(indol-3-yl)glycerol 3-phosphate + L-serine = D-glyceraldehyde 3-phosphate + L-tryptophan + H2O. It functions in the pathway amino-acid biosynthesis; L-tryptophan biosynthesis; L-tryptophan from chorismate: step 5/5. In terms of biological role, the alpha subunit is responsible for the aldol cleavage of indoleglycerol phosphate to indole and glyceraldehyde 3-phosphate. The protein is Tryptophan synthase alpha chain of Acidovorax ebreus (strain TPSY) (Diaphorobacter sp. (strain TPSY)).